The chain runs to 49 residues: Sperm protamine P1 (49 aa).

It belongs to the protamine P1 family. In terms of tissue distribution, testis.

It is found in the nucleus. The protein localises to the chromosome. Its function is as follows. Protamines substitute for histones in the chromatin of sperm during the haploid phase of spermatogenesis. They compact sperm DNA into a highly condensed, stable and inactive complex. The chain is Sperm protamine P1 (PRM1) from Pteropus hypomelanus (Island flying fox).